We begin with the raw amino-acid sequence, 320 residues long: Uridine phosphorylase 2 (320 aa).

Residues G66, R100, and 144-147 (RIGT) contribute to the phosphate site. A disulfide bridge links C95 with C102. Residues 148-149 (SG) and 223-225 (QGR) each bind uridine.

The protein belongs to the PNP/UDP phosphorylase family. As to quaternary structure, homodimer. In terms of tissue distribution, liver specific.

It catalyses the reaction uridine + phosphate = alpha-D-ribose 1-phosphate + uracil. It carries out the reaction 2'-deoxyuridine + phosphate = 2-deoxy-alpha-D-ribose 1-phosphate + uracil. It functions in the pathway pyrimidine metabolism; UMP biosynthesis via salvage pathway; uracil from uridine (phosphorylase route): step 1/1. Its activity is regulated as follows. A conditional disulfide bridge can form within the protein that dislocates a critical phosphate-coordinating arginine Arg-100 away from the active site, disabling the enzyme. Functionally, catalyzes the reversible phosphorylytic cleavage of uridine to uracil and ribose-1-phosphate which can then be utilized as carbon and energy sources or in the rescue of pyrimidine bases for nucleotide synthesis. Shows broad substrate specificity and can also accept deoxyuridine and other analogous compounds. This Mus musculus (Mouse) protein is Uridine phosphorylase 2.